A 624-amino-acid polypeptide reads, in one-letter code: Altered inheritance of mitochondria protein 9, mitochondrial (624 aa).

Residues 1 to 34 constitute a mitochondrion transit peptide; sequence MLSRVARCSRTLNQVTRNGQSGLFSAVLRTSIRQ.

The protein belongs to the AIM9 family.

The protein resides in the mitochondrion. The polypeptide is Altered inheritance of mitochondria protein 9, mitochondrial (AIM9) (Candida albicans (strain WO-1) (Yeast)).